The chain runs to 311 residues: Large ribosomal subunit protein uL18 (311 aa).

Belongs to the universal ribosomal protein uL18 family. In terms of assembly, component of the large ribosomal subunit (LSU).

The protein resides in the cytoplasm. It localises to the nucleus. Its function is as follows. Component of the ribosome, a large ribonucleoprotein complex responsible for the synthesis of proteins in the cell. The small ribosomal subunit (SSU) binds messenger RNAs (mRNAs) and translates the encoded message by selecting cognate aminoacyl-transfer RNA (tRNA) molecules. The large subunit (LSU) contains the ribosomal catalytic site termed the peptidyl transferase center (PTC), which catalyzes the formation of peptide bonds, thereby polymerizing the amino acids delivered by tRNAs into a polypeptide chain. The nascent polypeptides leave the ribosome through a tunnel in the LSU and interact with protein factors that function in enzymatic processing, targeting, and the membrane insertion of nascent chains at the exit of the ribosomal tunnel. The polypeptide is Large ribosomal subunit protein uL18 (RPL5) (Eimeria tenella (Coccidian parasite)).